The chain runs to 83 residues: Cytochrome b559 subunit alpha (83 aa).

The helical transmembrane segment at 22–36 (VIHAVTLPAIFLAGF) threads the bilayer. Position 24 (histidine 24) interacts with heme.

It belongs to the PsbE/PsbF family. In terms of assembly, heterodimer of an alpha subunit and a beta subunit. PSII is composed of 1 copy each of membrane proteins PsbA, PsbB, PsbC, PsbD, PsbE, PsbF, PsbH, PsbI, PsbJ, PsbK, PsbL, PsbM, PsbT, PsbX, PsbY, PsbZ, Psb30/Ycf12, peripheral proteins PsbO, CyanoQ (PsbQ), PsbU, PsbV and a large number of cofactors. It forms dimeric complexes. It depends on heme b as a cofactor.

It is found in the cellular thylakoid membrane. This b-type cytochrome is tightly associated with the reaction center of photosystem II (PSII). PSII is a light-driven water:plastoquinone oxidoreductase that uses light energy to abstract electrons from H(2)O, generating O(2) and a proton gradient subsequently used for ATP formation. It consists of a core antenna complex that captures photons, and an electron transfer chain that converts photonic excitation into a charge separation. The polypeptide is Cytochrome b559 subunit alpha (Synechococcus sp. (strain RCC307)).